Reading from the N-terminus, the 346-residue chain is Methylthioribose-1-phosphate isomerase (346 aa).

Substrate-binding positions include 48–50 (RGA), R91, and Q196. D237 acts as the Proton donor in catalysis. 247–248 (NK) contributes to the substrate binding site.

Belongs to the eIF-2B alpha/beta/delta subunits family. MtnA subfamily.

The enzyme catalyses 5-(methylsulfanyl)-alpha-D-ribose 1-phosphate = 5-(methylsulfanyl)-D-ribulose 1-phosphate. The protein operates within amino-acid biosynthesis; L-methionine biosynthesis via salvage pathway; L-methionine from S-methyl-5-thio-alpha-D-ribose 1-phosphate: step 1/6. Its function is as follows. Catalyzes the interconversion of methylthioribose-1-phosphate (MTR-1-P) into methylthioribulose-1-phosphate (MTRu-1-P). This is Methylthioribose-1-phosphate isomerase from Thermosipho africanus (strain TCF52B).